The chain runs to 234 residues: Rhodanese-like domain-containing protein 9, chloroplastic (234 aa).

The transit peptide at 1–47 (MAGIISPSPTALYFTSNVGGRRLKAVSWAGKSVSGNVIRRRSLRIAA) directs the protein to the chloroplast. One can recognise a Rhodanese domain in the interval 62–185 (AEEGYSVVDV…VKPGTFESVG (124 aa)). Residue cysteine 145 is the Cysteine persulfide intermediate of the active site. Residues 204 to 222 (ISAVLGTVLVCAYLFIQFF) form a helical membrane-spanning segment.

The protein resides in the plastid. It is found in the chloroplast. Its subcellular location is the membrane. The protein is Rhodanese-like domain-containing protein 9, chloroplastic (STR9) of Arabidopsis thaliana (Mouse-ear cress).